The chain runs to 78 residues: Acyl carrier protein (78 aa).

The Carrier domain maps to 2 to 77; that stretch reads STIEESVKSI…AAIDFIKESK (76 aa). Residue Ser37 is modified to O-(pantetheine 4'-phosphoryl)serine.

This sequence belongs to the acyl carrier protein (ACP) family. In terms of processing, 4'-phosphopantetheine is transferred from CoA to a specific serine of apo-ACP by AcpS. This modification is essential for activity because fatty acids are bound in thioester linkage to the sulfhydryl of the prosthetic group.

It is found in the cytoplasm. Its pathway is lipid metabolism; fatty acid biosynthesis. Carrier of the growing fatty acid chain in fatty acid biosynthesis. This chain is Acyl carrier protein, found in Wigglesworthia glossinidia brevipalpis.